The following is a 193-amino-acid chain: CASP-like protein 2D1 (193 aa).

The interval 1 to 24 (MRANNNNTREEERSSSSKQQQPQA) is disordered. Residues 1–29 (MRANNNNTREEERSSSSKQQQPQAHMSLK) lie on the Cytoplasmic side of the membrane. Residues 30–50 (IIDSCLRLSVVPLSVATIWLT) traverse the membrane as a helical segment. At 51 to 73 (VTNHESNPDYGNLDYNSIMGLKY) the chain is on the extracellular side. Residues 74-94 (MVGVSAISAIYALLSTISLWV) form a helical membrane-spanning segment. At 95–109 (TCLVSKAWLFFVPDQ) the chain is on the cytoplasmic side. The chain crosses the membrane as a helical span at residues 110 to 132 (VLAYVMTTSVAGATEIVYLLNKG). At 133–151 (DKIVTWSEMCSSYPHYCSK) the chain is on the extracellular side. The chain crosses the membrane as a helical span at residues 152-172 (LTIALGLHVFVLFFFLFLSVI). Residues 173–193 (SAYRAFSPFDPPCDSQTNIDA) are Cytoplasmic-facing.

The protein belongs to the Casparian strip membrane proteins (CASP) family. Homodimer and heterodimers.

The protein resides in the cell membrane. In Arabidopsis lyrata subsp. lyrata (Lyre-leaved rock-cress), this protein is CASP-like protein 2D1.